We begin with the raw amino-acid sequence, 375 residues long: MTNRKEIIGDAEKIVIKIGTTSISREDGSLNNEFMDTIASQVSELHRAGKQIILVSSGSIGIGIEILDLGCRPKEIPVRQAAAAVGQGVLMQHWTEAFQKYGLNVAQILLTYDSFTNRLTYLNLRNSISTLLSYGVIPIINENDPICVHEIEATLGDNDKLSAMVASKMEADLLILFTDIDGLYDKNPKRHDDAVLLRTVEEITPTIESYGGNPTSMKGVGGMRTKIDAAKICNISGCYMVIANSNVDDGIRRILDGEELGTLFLTNQFVHKNRIRWIILARSSGSIVVDTGAKEALAKRMSLLPSGVLGVAGTFDRGDIVKLECDGVVFGKGITDYTSEELKAIKGKQTNEIADILGYKNYDHVVQKDNIGLFK.

Lys17 provides a ligand contact to ATP. Substrate is bound by residues Ser57, Asp144, and Asn158. An ATP-binding site is contributed by 178 to 179 (TD). Positions 284-360 (SGSIVVDTGA…NEIADILGYK (77 aa)) constitute a PUA domain.

This sequence belongs to the glutamate 5-kinase family.

It localises to the cytoplasm. The catalysed reaction is L-glutamate + ATP = L-glutamyl 5-phosphate + ADP. The protein operates within amino-acid biosynthesis; L-proline biosynthesis; L-glutamate 5-semialdehyde from L-glutamate: step 1/2. Catalyzes the transfer of a phosphate group to glutamate to form L-glutamate 5-phosphate. This chain is Glutamate 5-kinase, found in Methanococcoides burtonii (strain DSM 6242 / NBRC 107633 / OCM 468 / ACE-M).